The sequence spans 201 residues: Kinetochore protein SPC24 homolog (201 aa).

Residues 78–133 (DIAAEDEIERLQKELDEEMEREFKLKDELRLVADELKDLNAQLSSIDEHKQSTKRK) adopt a coiled-coil conformation.

The protein belongs to the SPC24 family. As to quaternary structure, component of the NDC80 complex, which consists of NDC80, NUF2, SPC24 and SPC25. As to expression, highly expressed in actively dividing tissues, such as shoot apical meristem (SAM), root apical meristem (RAM), vasculature, newly emerging leaves and inflorescence shoots.

Its subcellular location is the chromosome. It is found in the centromere. Acts as a component of the essential kinetochore-associated NDC80 complex, which is required for chromosome segregation and spindle checkpoint activity to ensure proper cell division. Required for the maintenance of plant architecture. This is Kinetochore protein SPC24 homolog from Arabidopsis thaliana (Mouse-ear cress).